Here is a 398-residue protein sequence, read N- to C-terminus: 1-deoxy-D-xylulose 5-phosphate reductoisomerase (398 aa).

NADPH-binding residues include T10, G11, S12, I13, G36, K37, N38, and N124. Position 125 (K125) interacts with 1-deoxy-D-xylulose 5-phosphate. E126 is an NADPH binding site. Position 150 (D150) interacts with Mn(2+). Residues S151, E152, S186, and H209 each coordinate 1-deoxy-D-xylulose 5-phosphate. A Mn(2+)-binding site is contributed by E152. Residue G215 coordinates NADPH. 1-deoxy-D-xylulose 5-phosphate-binding residues include S222, N227, K228, and E231. E231 serves as a coordination point for Mn(2+).

The protein belongs to the DXR family. Homodimer. Mg(2+) serves as cofactor. It depends on Mn(2+) as a cofactor.

It catalyses the reaction 2-C-methyl-D-erythritol 4-phosphate + NADP(+) = 1-deoxy-D-xylulose 5-phosphate + NADPH + H(+). It participates in isoprenoid biosynthesis; isopentenyl diphosphate biosynthesis via DXP pathway; isopentenyl diphosphate from 1-deoxy-D-xylulose 5-phosphate: step 1/6. Catalyzes the NADPH-dependent rearrangement and reduction of 1-deoxy-D-xylulose-5-phosphate (DXP) to 2-C-methyl-D-erythritol 4-phosphate (MEP). The protein is 1-deoxy-D-xylulose 5-phosphate reductoisomerase of Shigella flexneri.